We begin with the raw amino-acid sequence, 186 residues long: Imidazole glycerol phosphate synthase subunit HisH (186 aa).

One can recognise a Glutamine amidotransferase type-1 domain in the interval 1 to 186; it reads MIAIIDYGSG…KLLRNFGELA (186 aa). Cys72 serves as the catalytic Nucleophile. Residues His167 and Glu169 contribute to the active site.

As to quaternary structure, heterodimer of HisH and HisF.

Its subcellular location is the cytoplasm. The enzyme catalyses 5-[(5-phospho-1-deoxy-D-ribulos-1-ylimino)methylamino]-1-(5-phospho-beta-D-ribosyl)imidazole-4-carboxamide + L-glutamine = D-erythro-1-(imidazol-4-yl)glycerol 3-phosphate + 5-amino-1-(5-phospho-beta-D-ribosyl)imidazole-4-carboxamide + L-glutamate + H(+). It carries out the reaction L-glutamine + H2O = L-glutamate + NH4(+). It functions in the pathway amino-acid biosynthesis; L-histidine biosynthesis; L-histidine from 5-phospho-alpha-D-ribose 1-diphosphate: step 5/9. Its function is as follows. IGPS catalyzes the conversion of PRFAR and glutamine to IGP, AICAR and glutamate. The HisH subunit catalyzes the hydrolysis of glutamine to glutamate and ammonia as part of the synthesis of IGP and AICAR. The resulting ammonia molecule is channeled to the active site of HisF. The chain is Imidazole glycerol phosphate synthase subunit HisH from Picrophilus torridus (strain ATCC 700027 / DSM 9790 / JCM 10055 / NBRC 100828 / KAW 2/3).